Reading from the N-terminus, the 621-residue chain is 1-deoxy-D-xylulose-5-phosphate synthase (621 aa).

Thiamine diphosphate is bound by residues His-76 and 117 to 119 (AHS). Asp-148 contacts Mg(2+). Thiamine diphosphate contacts are provided by residues 149–150 (GA), Asn-178, Tyr-285, and Glu-367. Residue Asn-178 participates in Mg(2+) binding.

It belongs to the transketolase family. DXPS subfamily. Homodimer. Requires Mg(2+) as cofactor. Thiamine diphosphate serves as cofactor.

It catalyses the reaction D-glyceraldehyde 3-phosphate + pyruvate + H(+) = 1-deoxy-D-xylulose 5-phosphate + CO2. The protein operates within metabolic intermediate biosynthesis; 1-deoxy-D-xylulose 5-phosphate biosynthesis; 1-deoxy-D-xylulose 5-phosphate from D-glyceraldehyde 3-phosphate and pyruvate: step 1/1. Functionally, catalyzes the acyloin condensation reaction between C atoms 2 and 3 of pyruvate and glyceraldehyde 3-phosphate to yield 1-deoxy-D-xylulose-5-phosphate (DXP). The chain is 1-deoxy-D-xylulose-5-phosphate synthase from Aromatoleum aromaticum (strain DSM 19018 / LMG 30748 / EbN1) (Azoarcus sp. (strain EbN1)).